The sequence spans 345 residues: Anthranilate phosphoribosyltransferase (345 aa).

5-phospho-alpha-D-ribose 1-diphosphate-binding positions include Gly83, 86–87 (GD), Thr91, 93–96 (NIST), 111–119 (KHGNRNLSS), and Ser123. Gly83 provides a ligand contact to anthranilate. Ser95 contacts Mg(2+). Residue Asn114 coordinates anthranilate. Residue Arg169 coordinates anthranilate. The Mg(2+) site is built by Asp228 and Glu229.

It belongs to the anthranilate phosphoribosyltransferase family. As to quaternary structure, homodimer. Mg(2+) is required as a cofactor.

The catalysed reaction is N-(5-phospho-beta-D-ribosyl)anthranilate + diphosphate = 5-phospho-alpha-D-ribose 1-diphosphate + anthranilate. It participates in amino-acid biosynthesis; L-tryptophan biosynthesis; L-tryptophan from chorismate: step 2/5. Functionally, catalyzes the transfer of the phosphoribosyl group of 5-phosphorylribose-1-pyrophosphate (PRPP) to anthranilate to yield N-(5'-phosphoribosyl)-anthranilate (PRA). This chain is Anthranilate phosphoribosyltransferase, found in Paracoccus denitrificans (strain Pd 1222).